The following is a 380-amino-acid chain: Protein neprosin (380 aa).

A signal peptide spans 1 to 24 (MQAKFFTFVILSSVFYFNYPLAEA). A propeptide spans 25–128 (RSIQARLANK…QFPNLKFAPP (104 aa)) (activation peptide). Cys52 and Cys98 are joined by a disulfide. Residues Asn68, Asn145, and Asn152 are each glycosylated (N-linked (GlcNAc...) asparagine). The 252-residue stretch at 129–380 (SANTNHQYAV…YLFYGGPGCQ (252 aa)) folds into the Neprosin PEP catalytic domain. Glu188 is an active-site residue. The cysteines at positions 219 and 224 are disulfide-linked. A glycan (N-linked (GlcNAc...) asparagine) is linked at Asn253. Residue Glu297 is part of the active site. A disulfide bridge links Cys358 with Cys379.

It belongs to the peptidase G3 family.

Its subcellular location is the secreted. The catalysed reaction is Hydrolysis of Pro-|-Xaa &gt;&gt; Ala-|-Xaa in oligopeptides.. Weakly inhibited by the aspartic protease inhibitor pepstatin. Weakly inhibited by pepstatin A (IC(50) of 140 uM) and 1,2-epoxy-3-(p-nitrophenoxy)propane (EPNP) (IC(50) of 480 uM). Activity is not affected by the POP inhibitor Z-Pro-prolinal inhibitor or the denaturant urea. Its function is as follows. Glutamic endopeptidase that preferentially cleaves peptide bonds on the C-terminal side of proline residues. Also cleaves peptide bonds on the C-terminal side of alanine residues but with less efficiency. In contrast to most proline-cleaving enzymes, effectively degrades proteins of any size. Found in the viscoelastic fluid of the pitcher, and so likely functions in the digestion of their prey. This is Protein neprosin from Nepenthes x ventrata (Red tropical pitcher plant).